The sequence spans 702 residues: Ribosomal RNA large subunit methyltransferase K/L (702 aa).

Positions 43–154 (LVYQSLMWSR…KETASIALDL (112 aa)) constitute a THUMP domain.

This sequence belongs to the methyltransferase superfamily. RlmKL family.

It is found in the cytoplasm. It catalyses the reaction guanosine(2445) in 23S rRNA + S-adenosyl-L-methionine = N(2)-methylguanosine(2445) in 23S rRNA + S-adenosyl-L-homocysteine + H(+). The catalysed reaction is guanosine(2069) in 23S rRNA + S-adenosyl-L-methionine = N(2)-methylguanosine(2069) in 23S rRNA + S-adenosyl-L-homocysteine + H(+). Functionally, specifically methylates the guanine in position 2445 (m2G2445) and the guanine in position 2069 (m7G2069) of 23S rRNA. The sequence is that of Ribosomal RNA large subunit methyltransferase K/L from Shigella boydii serotype 4 (strain Sb227).